The chain runs to 502 residues: Glycerol kinase (502 aa).

Threonine 14 lines the ADP pocket. ATP is bound by residues threonine 14, threonine 15, and serine 16. Threonine 14 is a binding site for sn-glycerol 3-phosphate. Arginine 18 contributes to the ADP binding site. 4 residues coordinate sn-glycerol 3-phosphate: arginine 84, glutamate 85, tyrosine 136, and aspartate 246. Glycerol is bound by residues arginine 84, glutamate 85, tyrosine 136, aspartate 246, and glutamine 247. Residues threonine 268 and glycine 311 each contribute to the ADP site. Residues threonine 268, glycine 311, glutamine 315, and glycine 412 each coordinate ATP. ADP-binding residues include glycine 412 and asparagine 416.

This sequence belongs to the FGGY kinase family. In terms of assembly, homotetramer and homodimer (in equilibrium). Heterodimer with EIIA-Glc. Binds 1 zinc ion per glycerol kinase EIIA-Glc dimer. The zinc ion is important for dimerization.

It carries out the reaction glycerol + ATP = sn-glycerol 3-phosphate + ADP + H(+). It participates in polyol metabolism; glycerol degradation via glycerol kinase pathway; sn-glycerol 3-phosphate from glycerol: step 1/1. Activity of this regulatory enzyme is affected by several metabolites. Allosterically and non-competitively inhibited by fructose 1,6-bisphosphate (FBP) and unphosphorylated phosphocarrier protein EIIA-Glc (III-Glc), an integral component of the bacterial phosphotransferase (PTS) system. Key enzyme in the regulation of glycerol uptake and metabolism. Catalyzes the phosphorylation of glycerol to yield sn-glycerol 3-phosphate. This is Glycerol kinase from Salmonella heidelberg (strain SL476).